The primary structure comprises 120 residues: Large ribosomal subunit protein bL20 (120 aa).

Belongs to the bacterial ribosomal protein bL20 family.

Functionally, binds directly to 23S ribosomal RNA and is necessary for the in vitro assembly process of the 50S ribosomal subunit. It is not involved in the protein synthesizing functions of that subunit. The protein is Large ribosomal subunit protein bL20 of Chlamydia abortus (strain DSM 27085 / S26/3) (Chlamydophila abortus).